Consider the following 942-residue polypeptide: Isoleucine--tRNA ligase (942 aa).

Positions proline 58–histidine 68 match the 'HIGH' region motif. An L-isoleucyl-5'-AMP-binding site is contributed by glutamate 566. Positions lysine 607 to serine 611 match the 'KMSKS' region motif. Lysine 610 is an ATP binding site. Residues cysteine 905, cysteine 908, cysteine 925, and cysteine 928 each contribute to the Zn(2+) site.

This sequence belongs to the class-I aminoacyl-tRNA synthetase family. IleS type 1 subfamily. In terms of assembly, monomer. Zn(2+) serves as cofactor.

The protein resides in the cytoplasm. The enzyme catalyses tRNA(Ile) + L-isoleucine + ATP = L-isoleucyl-tRNA(Ile) + AMP + diphosphate. In terms of biological role, catalyzes the attachment of isoleucine to tRNA(Ile). As IleRS can inadvertently accommodate and process structurally similar amino acids such as valine, to avoid such errors it has two additional distinct tRNA(Ile)-dependent editing activities. One activity is designated as 'pretransfer' editing and involves the hydrolysis of activated Val-AMP. The other activity is designated 'posttransfer' editing and involves deacylation of mischarged Val-tRNA(Ile). In Vibrio campbellii (strain ATCC BAA-1116), this protein is Isoleucine--tRNA ligase.